We begin with the raw amino-acid sequence, 201 residues long: Holliday junction branch migration complex subunit RuvA (201 aa).

The tract at residues 1-64 (MIGRLHGKII…EDAHLLFGFA (64 aa)) is domain I. The domain II stretch occupies residues 65-143 (QKQDRTLFRE…GVAQSDFFEE (79 aa)). The interval 144 to 154 (HSVETIVATHS) is flexible linker. Positions 154–201 (SHDPADEARDALVALGYKLADAEKMIKKVNKAGATSEQLIREALKASL) are domain III.

This sequence belongs to the RuvA family. As to quaternary structure, homotetramer. Forms an RuvA(8)-RuvB(12)-Holliday junction (HJ) complex. HJ DNA is sandwiched between 2 RuvA tetramers; dsDNA enters through RuvA and exits via RuvB. An RuvB hexamer assembles on each DNA strand where it exits the tetramer. Each RuvB hexamer is contacted by two RuvA subunits (via domain III) on 2 adjacent RuvB subunits; this complex drives branch migration. In the full resolvosome a probable DNA-RuvA(4)-RuvB(12)-RuvC(2) complex forms which resolves the HJ.

It is found in the cytoplasm. Functionally, the RuvA-RuvB-RuvC complex processes Holliday junction (HJ) DNA during genetic recombination and DNA repair, while the RuvA-RuvB complex plays an important role in the rescue of blocked DNA replication forks via replication fork reversal (RFR). RuvA specifically binds to HJ cruciform DNA, conferring on it an open structure. The RuvB hexamer acts as an ATP-dependent pump, pulling dsDNA into and through the RuvAB complex. HJ branch migration allows RuvC to scan DNA until it finds its consensus sequence, where it cleaves and resolves the cruciform DNA. The sequence is that of Holliday junction branch migration complex subunit RuvA from Actinobacillus pleuropneumoniae serotype 5b (strain L20).